The primary structure comprises 779 residues: Transcription activator of gluconeogenesis BDCG_02812 (779 aa).

A disordered region spans residues 1–70 (MTASTRNGSP…NAKDPLRPRR (70 aa)). Residues 25–61 (KSMTTTPANPPETKSQTNGKGSGTAQSSQKPASTSAN) are compositionally biased toward polar residues. A DNA-binding region (zn(2)-C6 fungal-type) is located at residues 77–105 (CFACQRAHLTCGDERPCQRCIKRGLQDAC). 6 disordered regions span residues 135 to 163 (QANT…QSVS), 202 to 239 (SVFH…SVSG), 285 to 344 (GAGD…ANPR), 401 to 421 (TNLM…PGLK), 559 to 590 (GSSL…PHTG), and 655 to 732 (FHGK…QTWG). A compositionally biased stretch (polar residues) spans 202–226 (SVFHAQSPSSTQNFDLSSNPQTQNL). Residues 227–238 (SSAMSQTASSVS) show a composition bias toward low complexity. Composition is skewed to polar residues over residues 291–322 (PSDS…NQSP), 333–344 (WNPTGQGQANPR), and 401–416 (TNLM…SRIS). Low complexity predominate over residues 560–572 (SSLSSASSVRGSS). The span at 573–586 (TFTPRNNNTHNSID) shows a compositional bias: polar residues. The segment covering 672 to 719 (TGTTTSGDVATTTATGTSTSNGANANTNGNNTNPNDPSSAASSSASSA) has biased composition (low complexity). Over residues 720 to 729 (LQGPQQSPRQ) the composition is skewed to polar residues.

The protein belongs to the ERT1/acuK family.

It localises to the nucleus. In terms of biological role, transcription factor which regulates nonfermentable carbon utilization. Activator of gluconeogenetic genes. The chain is Transcription activator of gluconeogenesis BDCG_02812 from Ajellomyces dermatitidis (strain ER-3 / ATCC MYA-2586) (Blastomyces dermatitidis).